The chain runs to 241 residues: Large ribosomal subunit protein uL13c (241 aa).

A chloroplast-targeting transit peptide spans M1–K50.

This sequence belongs to the universal ribosomal protein uL13 family. Part of the 50S ribosomal subunit.

The protein resides in the plastid. It localises to the chloroplast. The polypeptide is Large ribosomal subunit protein uL13c (RPL13) (Arabidopsis thaliana (Mouse-ear cress)).